The following is a 391-amino-acid chain: GTPase Obg (391 aa).

In terms of domain architecture, Obg spans 1–159 (MKFVDEAVVK…REIRLELLLL (159 aa)). In terms of domain architecture, OBG-type G spans 160-333 (ADVGMLGLPN…LCYKLADFME (174 aa)). GTP-binding positions include 166 to 173 (GLPNAGKS), 191 to 195 (FTTLI), 213 to 216 (DIPG), 283 to 286 (NKTD), and 314 to 316 (SAI). 2 residues coordinate Mg(2+): Ser173 and Thr193. Residues 367–383 (TEEDDDDWDDCDDEDDD) show a composition bias toward acidic residues. A disordered region spans residues 367 to 391 (TEEDDDDWDDCDDEDDDGHVVYVRD).

Belongs to the TRAFAC class OBG-HflX-like GTPase superfamily. OBG GTPase family. As to quaternary structure, monomer. It depends on Mg(2+) as a cofactor.

Its subcellular location is the cytoplasm. In terms of biological role, an essential GTPase which binds GTP, GDP and possibly (p)ppGpp with moderate affinity, with high nucleotide exchange rates and a fairly low GTP hydrolysis rate. Plays a role in control of the cell cycle, stress response, ribosome biogenesis and in those bacteria that undergo differentiation, in morphogenesis control. The chain is GTPase Obg from Vibrio campbellii (strain ATCC BAA-1116).